Consider the following 308-residue polypeptide: Elongation factor Ts (308 aa).

The involved in Mg(2+) ion dislocation from EF-Tu stretch occupies residues 80-83 (TDFV).

It belongs to the EF-Ts family.

Its subcellular location is the cytoplasm. In terms of biological role, associates with the EF-Tu.GDP complex and induces the exchange of GDP to GTP. It remains bound to the aminoacyl-tRNA.EF-Tu.GTP complex up to the GTP hydrolysis stage on the ribosome. The sequence is that of Elongation factor Ts from Erythrobacter litoralis (strain HTCC2594).